The chain runs to 108 residues: DNA-directed RNA polymerase III subunit RPC10 (108 aa).

Zn(2+)-binding residues include cysteine 5, cysteine 8, cysteine 25, cysteine 28, cysteine 69, and cysteine 72. Residues cysteine 5–cysteine 28 form a C4-type zinc finger. A TFIIS-type zinc finger spans residues threonine 65–arginine 107. The Hairpin signature appears at aspartate 88–glutamate 89. Positions 98 and 102 each coordinate Zn(2+).

This sequence belongs to the archaeal RpoM/eukaryotic RPA12/RPB9/RPC11 RNA polymerase family. As to quaternary structure, component of the RNA polymerase III complex consisting of 17 subunits: a ten-subunit horseshoe-shaped catalytic core composed of POLR3A/RPC1, POLR3B/RPC2, POLR1C/RPAC1, POLR1D/RPAC2, POLR3K/RPC10, POLR2E/RPABC1, POLR2F/RPABC2, POLR2H/RPABC3, POLR2K/RPABC4 and POLR2L/RPABC5; a mobile stalk composed of two subunits POLR3H/RPC8 and CRCP/RPC9, protruding from the core and functioning primarily in transcription initiation; and additional subunits homologous to general transcription factors of the RNA polymerase II machinery, POLR3C/RPC3-POLR3F/RPC6-POLR3G/RPC7 heterotrimer required for transcription initiation and POLR3D/RPC4-POLR3E/RPC5 heterodimer involved in both transcription initiation and termination.

The protein resides in the nucleus. Its function is as follows. Core component of RNA polymerase III (Pol III) which synthesizes small non-coding RNAs using the four ribonucleoside triphosphates as substrates. Can mediate Pol I proofreading of the nascent RNA transcript. Anchors into the Pol III active site to constantly monitor transcription fidelity, cleaves mis-incorporated 5'-ribonucleotides and restarts the transcription process. Once Pol III reaches the poly(dT) termination signal, can induce Pol III clamp opening and transcription termination. Pol III plays an important role in sensing and limiting infection by intracellular bacteria and DNA viruses. Acts as a nuclear and cytosolic DNA sensor involved in innate immune response. Can sense non-self dsDNA that serves as template for transcription into dsRNA. The non-self RNA polymerase III transcripts, such as Epstein-Barr virus-encoded RNAs (EBERs) induce type I interferon and NF-kappa-B through the RIG-I pathway. In Homo sapiens (Human), this protein is DNA-directed RNA polymerase III subunit RPC10.